The primary structure comprises 80 residues: Progonadoliberin-1 (80 aa).

Residues 1 to 21 (MGIKRALWWMVVCVVVLQVSA) form the signal peptide. Gln22 carries the pyrrolidone carboxylic acid modification. The residue at position 31 (Gly31) is a Glycine amide.

It belongs to the GnRH family.

Its subcellular location is the secreted. Functionally, stimulates the secretion of gonadotropins. This is Progonadoliberin-1 (gnrh1) from Clarias gariepinus (North African catfish).